A 530-amino-acid chain; its full sequence is Autoinducer-2 kinase (530 aa).

This sequence belongs to the FGGY kinase family.

Its subcellular location is the cytoplasm. It carries out the reaction (S)-4,5-dihydroxypentane-2,3-dione + ATP = (2S)-2-hydroxy-3,4-dioxopentyl phosphate + ADP + H(+). Functionally, catalyzes the phosphorylation of autoinducer-2 (AI-2) to phospho-AI-2, which subsequently inactivates the transcriptional regulator LsrR and leads to the transcription of the lsr operon. Phosphorylates the ring-open form of (S)-4,5-dihydroxypentane-2,3-dione (DPD), which is the precursor to all AI-2 signaling molecules, at the C5 position. This Salmonella typhimurium (strain LT2 / SGSC1412 / ATCC 700720) protein is Autoinducer-2 kinase.